A 295-amino-acid polypeptide reads, in one-letter code: 4-hydroxy-tetrahydrodipicolinate synthase (295 aa).

Residue Thr-48 participates in pyruvate binding. Residue Tyr-135 is the Proton donor/acceptor of the active site. Lys-163 serves as the catalytic Schiff-base intermediate with substrate. Val-204 contacts pyruvate.

The protein belongs to the DapA family. In terms of assembly, homotetramer; dimer of dimers.

The protein localises to the cytoplasm. The enzyme catalyses L-aspartate 4-semialdehyde + pyruvate = (2S,4S)-4-hydroxy-2,3,4,5-tetrahydrodipicolinate + H2O + H(+). It functions in the pathway amino-acid biosynthesis; L-lysine biosynthesis via DAP pathway; (S)-tetrahydrodipicolinate from L-aspartate: step 3/4. In terms of biological role, catalyzes the condensation of (S)-aspartate-beta-semialdehyde [(S)-ASA] and pyruvate to 4-hydroxy-tetrahydrodipicolinate (HTPA). The chain is 4-hydroxy-tetrahydrodipicolinate synthase from Francisella philomiragia subsp. philomiragia (strain ATCC 25017 / CCUG 19701 / FSC 153 / O#319-036).